A 425-amino-acid polypeptide reads, in one-letter code: WD repeat-containing protein JIP5 (425 aa).

WD repeat units follow at residues Q9–S48, R71–K110, L117–A158, E219–E262, and L321–E358. The disordered stretch occupies residues Q354–A425. 2 stretches are compositionally biased toward acidic residues: residues V356–A368 and S378–E396. Basic residues predominate over residues Q399–K414.

The protein belongs to the WD repeat WDR55 family.

The protein resides in the nucleus. Its subcellular location is the nucleolus. This chain is WD repeat-containing protein JIP5 (JIP5), found in Phaeosphaeria nodorum (strain SN15 / ATCC MYA-4574 / FGSC 10173) (Glume blotch fungus).